The chain runs to 343 residues: Cytoplasmic tRNA 2-thiolation protein 1 (343 aa).

This sequence belongs to the TtcA family. CTU1/NCS6/ATPBD3 subfamily.

Its subcellular location is the cytoplasm. The protein operates within tRNA modification; 5-methoxycarbonylmethyl-2-thiouridine-tRNA biosynthesis. Functionally, plays a central role in 2-thiolation of mcm(5)S(2)U at tRNA wobble positions of tRNA(Lys), tRNA(Glu) and tRNA(Gln). Directly binds tRNAs and probably acts by catalyzing adenylation of tRNAs, an intermediate required for 2-thiolation. It is unclear whether it acts as a sulfurtransferase that transfers sulfur from thiocarboxylated URM1 onto the uridine of tRNAs at wobble position. In Drosophila mojavensis (Fruit fly), this protein is Cytoplasmic tRNA 2-thiolation protein 1.